The chain runs to 244 residues: NAD(P)H-quinone oxidoreductase subunit K (244 aa).

Positions 60, 61, 125, and 156 each coordinate [4Fe-4S] cluster. Residues 213–244 form a disordered region; it reads TSANSIPSSKKEKITELPDNNEKAEIIDTLEN. The segment covering 221-238 has biased composition (basic and acidic residues); it reads SKKEKITELPDNNEKAEI.

Belongs to the complex I 20 kDa subunit family. As to quaternary structure, NDH-1 can be composed of about 15 different subunits; different subcomplexes with different compositions have been identified which probably have different functions. It depends on [4Fe-4S] cluster as a cofactor.

The protein localises to the cellular thylakoid membrane. It carries out the reaction a plastoquinone + NADH + (n+1) H(+)(in) = a plastoquinol + NAD(+) + n H(+)(out). The enzyme catalyses a plastoquinone + NADPH + (n+1) H(+)(in) = a plastoquinol + NADP(+) + n H(+)(out). NDH-1 shuttles electrons from an unknown electron donor, via FMN and iron-sulfur (Fe-S) centers, to quinones in the respiratory and/or the photosynthetic chain. The immediate electron acceptor for the enzyme in this species is believed to be plastoquinone. Couples the redox reaction to proton translocation, and thus conserves the redox energy in a proton gradient. Cyanobacterial NDH-1 also plays a role in inorganic carbon-concentration. This is NAD(P)H-quinone oxidoreductase subunit K from Prochlorococcus marinus (strain MIT 9301).